A 356-amino-acid polypeptide reads, in one-letter code: Holliday junction branch migration complex subunit RuvB (356 aa).

The interval 4–191 (TDKLATEQRI…FGIVARLEFY (188 aa)) is large ATPase domain (RuvB-L). ATP contacts are provided by residues Leu-30, Arg-31, Gly-72, Lys-75, Thr-76, Thr-77, 138–140 (EDY), Arg-181, Tyr-191, and Arg-228. Thr-76 is a binding site for Mg(2+). Positions 192 to 262 (DAEQLSRIVR…VADAALAMLD (71 aa)) are small ATPAse domain (RuvB-S). The segment at 265–356 (PVGFDLMDRK…RGEWDTPDGK (92 aa)) is head domain (RuvB-H). DNA-binding residues include Arg-301, Arg-320, and Arg-325.

This sequence belongs to the RuvB family. Homohexamer. Forms an RuvA(8)-RuvB(12)-Holliday junction (HJ) complex. HJ DNA is sandwiched between 2 RuvA tetramers; dsDNA enters through RuvA and exits via RuvB. An RuvB hexamer assembles on each DNA strand where it exits the tetramer. Each RuvB hexamer is contacted by two RuvA subunits (via domain III) on 2 adjacent RuvB subunits; this complex drives branch migration. In the full resolvosome a probable DNA-RuvA(4)-RuvB(12)-RuvC(2) complex forms which resolves the HJ.

The protein resides in the cytoplasm. The enzyme catalyses ATP + H2O = ADP + phosphate + H(+). The RuvA-RuvB-RuvC complex processes Holliday junction (HJ) DNA during genetic recombination and DNA repair, while the RuvA-RuvB complex plays an important role in the rescue of blocked DNA replication forks via replication fork reversal (RFR). RuvA specifically binds to HJ cruciform DNA, conferring on it an open structure. The RuvB hexamer acts as an ATP-dependent pump, pulling dsDNA into and through the RuvAB complex. RuvB forms 2 homohexamers on either side of HJ DNA bound by 1 or 2 RuvA tetramers; 4 subunits per hexamer contact DNA at a time. Coordinated motions by a converter formed by DNA-disengaged RuvB subunits stimulates ATP hydrolysis and nucleotide exchange. Immobilization of the converter enables RuvB to convert the ATP-contained energy into a lever motion, pulling 2 nucleotides of DNA out of the RuvA tetramer per ATP hydrolyzed, thus driving DNA branch migration. The RuvB motors rotate together with the DNA substrate, which together with the progressing nucleotide cycle form the mechanistic basis for DNA recombination by continuous HJ branch migration. Branch migration allows RuvC to scan DNA until it finds its consensus sequence, where it cleaves and resolves cruciform DNA. This chain is Holliday junction branch migration complex subunit RuvB, found in Burkholderia lata (strain ATCC 17760 / DSM 23089 / LMG 22485 / NCIMB 9086 / R18194 / 383).